A 249-amino-acid polypeptide reads, in one-letter code: Probable phosphoglycerate mutase (249 aa).

Substrate is bound by residues Arg9–Asn16, Thr22–Gly23, Arg61, Glu88–Tyr91, Lys99, Arg115–Arg116, and Gly184–Asn185. Catalysis depends on His10, which acts as the Tele-phosphohistidine intermediate. The active-site Proton donor/acceptor is Glu88.

Belongs to the phosphoglycerate mutase family. BPG-dependent PGAM subfamily. Homodimer.

It catalyses the reaction (2R)-2-phosphoglycerate = (2R)-3-phosphoglycerate. The catalysed reaction is (2R)-3-phospho-glyceroyl phosphate = (2R)-2,3-bisphosphoglycerate + H(+). Catalyzes the interconversion of 2-phosphoglycerate and 3-phosphoglycerate. The protein is Probable phosphoglycerate mutase (gpmA) of Dictyostelium discoideum (Social amoeba).